The chain runs to 324 residues: ATP phosphoribosyltransferase regulatory subunit (324 aa).

Belongs to the class-II aminoacyl-tRNA synthetase family. HisZ subfamily. As to quaternary structure, heteromultimer composed of HisG and HisZ subunits.

Its subcellular location is the cytoplasm. It functions in the pathway amino-acid biosynthesis; L-histidine biosynthesis; L-histidine from 5-phospho-alpha-D-ribose 1-diphosphate: step 1/9. Its function is as follows. Required for the first step of histidine biosynthesis. May allow the feedback regulation of ATP phosphoribosyltransferase activity by histidine. The protein is ATP phosphoribosyltransferase regulatory subunit of Carboxydothermus hydrogenoformans (strain ATCC BAA-161 / DSM 6008 / Z-2901).